Consider the following 338-residue polypeptide: Phenylalanine--tRNA ligase alpha subunit (338 aa).

The tract at residues 71 to 101 (QFEEKRSSLSQQTSSSDTYQSLPDLTLPGRQ) is disordered. Over residues 78–92 (SLSQQTSSSDTYQSL) the composition is skewed to low complexity. Residue Glu253 coordinates Mg(2+).

It belongs to the class-II aminoacyl-tRNA synthetase family. Phe-tRNA synthetase alpha subunit type 1 subfamily. Tetramer of two alpha and two beta subunits. It depends on Mg(2+) as a cofactor.

The protein resides in the cytoplasm. The enzyme catalyses tRNA(Phe) + L-phenylalanine + ATP = L-phenylalanyl-tRNA(Phe) + AMP + diphosphate + H(+). This Desulfotalea psychrophila (strain LSv54 / DSM 12343) protein is Phenylalanine--tRNA ligase alpha subunit.